The sequence spans 349 residues: Achromobactin transport system permease protein CbrC (349 aa).

A run of 10 helical transmembrane segments spans residues 32–52 (LALL…KLML), 82–102 (VLAA…QAMI), 111–131 (ILGI…FLAA), 138–158 (LPLA…WLAW), 168–188 (VLTG…MLVF), 190–210 (PLTT…GASW), 216–236 (LGGW…QVRV), 263–283 (VALA…GLIA), 290–310 (LVAP…AGLV), and 325–345 (DLPA…YLLI).

It belongs to the binding-protein-dependent transport system permease family. FecCD subfamily.

It is found in the cell inner membrane. Functionally, part of the binding-protein-dependent transport system CbrABCD for uptake of the siderophore achromobactin. Probably responsible for the translocation of the substrate across the membrane. The sequence is that of Achromobactin transport system permease protein CbrC (cbrC) from Dickeya dadantii (strain 3937) (Erwinia chrysanthemi (strain 3937)).